The sequence spans 203 residues: Molybdenum cofactor guanylyltransferase (203 aa).

GTP-binding positions include 12-14, Lys25, Asn53, Asp71, and Asp101; that span reads LAG. Position 101 (Asp101) interacts with Mg(2+).

The protein belongs to the MobA family. In terms of assembly, monomer. Mg(2+) is required as a cofactor.

The protein localises to the cytoplasm. It catalyses the reaction Mo-molybdopterin + GTP + H(+) = Mo-molybdopterin guanine dinucleotide + diphosphate. In terms of biological role, transfers a GMP moiety from GTP to Mo-molybdopterin (Mo-MPT) cofactor (Moco or molybdenum cofactor) to form Mo-molybdopterin guanine dinucleotide (Mo-MGD) cofactor. This Methylibium petroleiphilum (strain ATCC BAA-1232 / LMG 22953 / PM1) protein is Molybdenum cofactor guanylyltransferase.